Consider the following 377-residue polypeptide: DNA-directed RNA polymerase subunit alpha (377 aa).

The segment at 1-259 (MSDSSHNLLY…KHFSVFEKMD (259 aa)) is alpha N-terminal domain (alpha-NTD). An alpha C-terminal domain (alpha-CTD) region spans residues 276-377 (KDDILHKLVL…KIRLSKNTKG (102 aa)).

The protein belongs to the RNA polymerase alpha chain family. In terms of assembly, homodimer. The RNAP catalytic core consists of 2 alpha, 1 beta, 1 beta' and 1 omega subunit. When a sigma factor is associated with the core the holoenzyme is formed, which can initiate transcription.

It catalyses the reaction RNA(n) + a ribonucleoside 5'-triphosphate = RNA(n+1) + diphosphate. In terms of biological role, DNA-dependent RNA polymerase catalyzes the transcription of DNA into RNA using the four ribonucleoside triphosphates as substrates. This chain is DNA-directed RNA polymerase subunit alpha, found in Chlamydia trachomatis serovar A (strain ATCC VR-571B / DSM 19440 / HAR-13).